A 93-amino-acid chain; its full sequence is MFKVNEYFDGTVKSIAFSQVDGQATIGVMAAGEYEFGTAQREIMHVISGELNVKLPDSTDWETFSTGSQFNVPANSKFQLKVSVDTAYLCEYR.

This sequence belongs to the nucleoside phosphorylase PpnP family.

It catalyses the reaction a purine D-ribonucleoside + phosphate = a purine nucleobase + alpha-D-ribose 1-phosphate. The catalysed reaction is adenosine + phosphate = alpha-D-ribose 1-phosphate + adenine. The enzyme catalyses cytidine + phosphate = cytosine + alpha-D-ribose 1-phosphate. It carries out the reaction guanosine + phosphate = alpha-D-ribose 1-phosphate + guanine. It catalyses the reaction inosine + phosphate = alpha-D-ribose 1-phosphate + hypoxanthine. The catalysed reaction is thymidine + phosphate = 2-deoxy-alpha-D-ribose 1-phosphate + thymine. The enzyme catalyses uridine + phosphate = alpha-D-ribose 1-phosphate + uracil. It carries out the reaction xanthosine + phosphate = alpha-D-ribose 1-phosphate + xanthine. Its function is as follows. Catalyzes the phosphorolysis of diverse nucleosides, yielding D-ribose 1-phosphate and the respective free bases. Can use uridine, adenosine, guanosine, cytidine, thymidine, inosine and xanthosine as substrates. Also catalyzes the reverse reactions. The chain is Pyrimidine/purine nucleoside phosphorylase from Pseudomonas savastanoi pv. phaseolicola (strain 1448A / Race 6) (Pseudomonas syringae pv. phaseolicola (strain 1448A / Race 6)).